A 239-amino-acid polypeptide reads, in one-letter code: Ribosomal RNA small subunit methyltransferase G (239 aa).

S-adenosyl-L-methionine-binding positions include Gly78, Phe83, 129 to 130, and Arg148; that span reads AE.

The protein belongs to the methyltransferase superfamily. RNA methyltransferase RsmG family.

It is found in the cytoplasm. Specifically methylates the N7 position of a guanine in 16S rRNA. The chain is Ribosomal RNA small subunit methyltransferase G from Clostridium botulinum (strain Kyoto / Type A2).